The chain runs to 373 residues: MDLEKYIFMYAKKVNLLNMNKEELLIFFDKLGEKPFRSHQIMRWIYHYYCDDFNYMTNISKSLKERLKQIAEIRAPIIIKEQLSSDGTIKWAMKIDEQQIETVYIPENKRTTLCVSSQIGCPLGCSFCGTAQQGFNRNLNVSEIIGQVWRAAQLINLNKKIKIKNNRFPITNIVFMGMGEPLLNIVNVVSAIRIILDDFGFKLSKRHITLSTAGIVPGIEKLKNMIDIPLAISLHAPNDIIRNKIMPINKKYNINSVLEAARRYSMDTKSNHGRITIEYVLLKNINDDVLHAHQLAKQLQGIPCKINLIPWNPIPNIRYACSSQIRMRAFLKVLLKYNIVTIIRKIRGADINAACGQLTGEVINRINLQYNSL.

The Proton acceptor role is filled by Glu-101. One can recognise a Radical SAM core domain in the interval 107 to 350; sequence ENKRTTLCVS…TIIRKIRGAD (244 aa). A disulfide bridge connects residues Cys-114 and Cys-355. 3 residues coordinate [4Fe-4S] cluster: Cys-121, Cys-125, and Cys-128. Residues 179–180, Ser-211, 233–235, and Asn-312 each bind S-adenosyl-L-methionine; these read GE and SLH. Cys-355 serves as the catalytic S-methylcysteine intermediate.

This sequence belongs to the radical SAM superfamily. RlmN family. The cofactor is [4Fe-4S] cluster.

It localises to the cytoplasm. The enzyme catalyses adenosine(2503) in 23S rRNA + 2 reduced [2Fe-2S]-[ferredoxin] + 2 S-adenosyl-L-methionine = 2-methyladenosine(2503) in 23S rRNA + 5'-deoxyadenosine + L-methionine + 2 oxidized [2Fe-2S]-[ferredoxin] + S-adenosyl-L-homocysteine. It carries out the reaction adenosine(37) in tRNA + 2 reduced [2Fe-2S]-[ferredoxin] + 2 S-adenosyl-L-methionine = 2-methyladenosine(37) in tRNA + 5'-deoxyadenosine + L-methionine + 2 oxidized [2Fe-2S]-[ferredoxin] + S-adenosyl-L-homocysteine. Specifically methylates position 2 of adenine 2503 in 23S rRNA and position 2 of adenine 37 in tRNAs. m2A2503 modification seems to play a crucial role in the proofreading step occurring at the peptidyl transferase center and thus would serve to optimize ribosomal fidelity. The protein is Dual-specificity RNA methyltransferase RlmN of Blochmanniella pennsylvanica (strain BPEN).